A 149-amino-acid polypeptide reads, in one-letter code: D-aminoacyl-tRNA deacylase (149 aa).

The Gly-cisPro motif, important for rejection of L-amino acids motif lies at 137-138; that stretch reads GP.

The protein belongs to the DTD family. As to quaternary structure, homodimer.

It is found in the cytoplasm. It catalyses the reaction glycyl-tRNA(Ala) + H2O = tRNA(Ala) + glycine + H(+). The enzyme catalyses a D-aminoacyl-tRNA + H2O = a tRNA + a D-alpha-amino acid + H(+). In terms of biological role, an aminoacyl-tRNA editing enzyme that deacylates mischarged D-aminoacyl-tRNAs. Also deacylates mischarged glycyl-tRNA(Ala), protecting cells against glycine mischarging by AlaRS. Acts via tRNA-based rather than protein-based catalysis; rejects L-amino acids rather than detecting D-amino acids in the active site. By recycling D-aminoacyl-tRNA to D-amino acids and free tRNA molecules, this enzyme counteracts the toxicity associated with the formation of D-aminoacyl-tRNA entities in vivo and helps enforce protein L-homochirality. This is D-aminoacyl-tRNA deacylase from Syntrophomonas wolfei subsp. wolfei (strain DSM 2245B / Goettingen).